Reading from the N-terminus, the 174-residue chain is MGRLVFNYRKAMREPKKIQQLTENYSLPFAVELIPAINYFIFVGLCFGFWYGVRMIFPHAFDNSYVIVIFGIPFFLTMLVTKIKPEGKNIYIYFFDFAKYYFFIKLPQKKYCNDRKIDLSNEKQIEFRKLVKVVDYSNETKNAYEGNTQEFAVNKNGRRVGVLPNKKQFDSYAK.

Helical transmembrane passes span 29–51 (FAVE…GFWY) and 66–83 (VIVI…VTKI).

The protein resides in the cell membrane. This is an uncharacterized protein from Bacillus subtilis (strain 168).